The sequence spans 111 residues: Ribonuclease P protein component (111 aa).

Belongs to the RnpA family. As to quaternary structure, consists of a catalytic RNA component (M1 or rnpB) and a protein subunit.

It catalyses the reaction Endonucleolytic cleavage of RNA, removing 5'-extranucleotides from tRNA precursor.. RNaseP catalyzes the removal of the 5'-leader sequence from pre-tRNA to produce the mature 5'-terminus. It can also cleave other RNA substrates such as 4.5S RNA. The protein component plays an auxiliary but essential role in vivo by binding to the 5'-leader sequence and broadening the substrate specificity of the ribozyme. This Clostridium botulinum (strain Loch Maree / Type A3) protein is Ribonuclease P protein component.